A 315-amino-acid chain; its full sequence is Methionyl-tRNA formyltransferase (315 aa).

113 to 116 (SLLP) contributes to the (6S)-5,6,7,8-tetrahydrofolate binding site.

This sequence belongs to the Fmt family.

The enzyme catalyses L-methionyl-tRNA(fMet) + (6R)-10-formyltetrahydrofolate = N-formyl-L-methionyl-tRNA(fMet) + (6S)-5,6,7,8-tetrahydrofolate + H(+). Attaches a formyl group to the free amino group of methionyl-tRNA(fMet). The formyl group appears to play a dual role in the initiator identity of N-formylmethionyl-tRNA by promoting its recognition by IF2 and preventing the misappropriation of this tRNA by the elongation apparatus. The protein is Methionyl-tRNA formyltransferase of Pectobacterium carotovorum subsp. carotovorum (strain PC1).